The following is a 1304-amino-acid chain: TPR-containing protein DDB_G0280363 (1304 aa).

Disordered stretches follow at residues 19–85, 153–195, 296–334, 447–477, 576–687, and 706–728; these read QQHH…HPQQ, NINN…NSSL, LPST…YTQQ, GFNW…QRQQ, QNQQ…VTTI, and LTTV…VESP. 3 stretches are compositionally biased toward low complexity: residues 25-44, 52-85, and 153-194; these read QQNN…QFNQ, HQQH…HPQQ, and NINN…NNSS. Polar residues predominate over residues 296-306; it reads LPSTNSSIVSR. The segment covering 307 to 316 has biased composition (low complexity); it reads QQQLQQQQQK. Residues 448 to 465 show a composition bias toward polar residues; sequence FNWSPSLQPDQSTSTNHT. Low complexity-rich tracts occupy residues 466 to 477 and 576 to 597; these read QAMLQQQQQRQQ and QNQQ…PNQH. Over residues 598–625 the composition is skewed to basic residues; sequence HGQHQHNQHNQHHNQHHNQSHPNHKNQH. The span at 626-687 shows a compositional bias: low complexity; sequence QKQNQTQQST…NNNTNNVTTI (62 aa). 7 TPR repeats span residues 769 to 802, 899 to 932, 978 to 1011, 1046 to 1079, 1084 to 1111, 1112 to 1150, and 1152 to 1184; these read WRVY…QPYI, MKHV…VEKG, WKIY…CPEN, SKLR…AHVE, WKVF…KESL, KIHS…VPKS, and EVWC…TPQF.

This Dictyostelium discoideum (Social amoeba) protein is TPR-containing protein DDB_G0280363.